We begin with the raw amino-acid sequence, 428 residues long: C4-dicarboxylate transport protein (428 aa).

Transmembrane regions (helical) follow at residues 8–28 (SLYFQVLTAIAIGILLGHFYP), 44–64 (LIKMIIAPVIFCTVVTGIAGM), 76–96 (VALLYFEIVSTIALIIGLIIV), 142–162 (IGAFASGNILQVLLFAVLFGF), 184–204 (VIFGIINMIMRLAPIGAFGAM), 222–242 (LIICFYITCILFVVLVLGSIA), 326–346 (IVHQITLLIVLLLSSKGAAGV), and 352–372 (IVLAATLSAVGHLPVAGLALI).

The protein belongs to the dicarboxylate/amino acid:cation symporter (DAACS) (TC 2.A.23) family.

The protein resides in the cell inner membrane. In terms of biological role, responsible for the transport of dicarboxylates such as succinate, fumarate, and malate from the periplasm across the membrane. This chain is C4-dicarboxylate transport protein, found in Escherichia coli O139:H28 (strain E24377A / ETEC).